Consider the following 322-residue polypeptide: (12E)-labda-8(17),12,14-triene synthase (322 aa).

The span at 1–11 (MNDATRTSTTP) shows a compositional bias: polar residues. The disordered stretch occupies residues 1-26 (MNDATRTSTTPPALPMPDLRDSFPGP). Mg(2+) contacts are provided by Asp-93 and Glu-98. The short motif at 93 to 98 (DDAHGE) is the DDXXXE motif element. A substrate-binding site is contributed by Arg-188. Mg(2+) contacts are provided by Asn-234 and Ser-238. Positions 234–242 (NDLASYAKE) match the NXXXSXXXE motif motif. Lys-241 contributes to the substrate binding site. Glu-242 serves as a coordination point for Mg(2+). 319–320 (RY) is a binding site for substrate.

The protein belongs to the terpene synthase family. Requires Mg(2+) as cofactor.

The enzyme catalyses (+)-copalyl diphosphate = (12E)-labda-8(17),12,14-triene + diphosphate. Its function is as follows. Involved in the biosynthesis of the labdane-type bicyclic diterpene labda-8(17),12(E),14-triene. Catalyzes the conversion of (+)-copalyl diphosphate to yield labda-8(17),12(E),14-triene. This Streptomyces anulatus (Streptomyces chrysomallus) protein is (12E)-labda-8(17),12,14-triene synthase.